The following is a 142-amino-acid chain: Large ribosomal subunit protein uL11 (142 aa).

This sequence belongs to the universal ribosomal protein uL11 family. Part of the ribosomal stalk of the 50S ribosomal subunit. Interacts with L10 and the large rRNA to form the base of the stalk. L10 forms an elongated spine to which L12 dimers bind in a sequential fashion forming a multimeric L10(L12)X complex. In terms of processing, one or more lysine residues are methylated.

In terms of biological role, forms part of the ribosomal stalk which helps the ribosome interact with GTP-bound translation factors. The sequence is that of Large ribosomal subunit protein uL11 from Shewanella piezotolerans (strain WP3 / JCM 13877).